A 981-amino-acid polypeptide reads, in one-letter code: Ubiquitin carboxyl-terminal hydrolase 15 (981 aa).

A2 is subject to N-acetylalanine. Positions 2-223 (AEGGAADLDT…KNEDGTWPRG (222 aa)) are mediates interaction with SART3. In terms of domain architecture, DUSP spans 7–118 (ADLDTQRSDI…GQEPIARKVV (112 aa)). The disordered stretch occupies residues 216–237 (EDGTWPRGPSTPKSPGASNFST). Phosphothreonine is present on T226. Residues 226–237 (TPKSPGASNFST) show a composition bias toward polar residues. Phosphoserine occurs at positions 229 and 242. In terms of domain architecture, USP spans 289 to 933 (CGLSNLGNTC…AAYVLFYQRQ (645 aa)). C298 acts as the Nucleophile in catalysis. T602 carries the phosphothreonine modification. Residues 629-694 (GSLHCCKDQN…GGDNDSENGL (66 aa)) are disordered. Acidic residues predominate over residues 656–673 (METDEPDDESSQDQELPS). H891 acts as the Proton acceptor in catalysis. The disordered stretch occupies residues 952 to 981 (SAATGIPLESDEDSNDNDNDIENENCMHTN). Positions 960–974 (ESDEDSNDNDNDIEN) are enriched in acidic residues. A phosphoserine mark is found at S961 and S965.

Belongs to the peptidase C19 family. A homodimer structure has been reported; however it is unclear whether the protein form a homodimer in vivo. Identified in a complex with the COP9 signalosome complex (CSN). Interacts with SMAD1, SMAD2 and SMAD3; the interaction is direct. Forms a complex with SMURF2 and SMAD7. Interacts with TGFBR1. Interacts with SART3; the interaction is direct. May interact with RNF20 and RNF40. May interact with PRKN. Interacts with INCA1. In terms of assembly, (Microbial infection) Interacts with human papillomavirus type 16 protein E6. Post-translationally, phosphorylated. Phosphorylation protects against ubiquitination and subsequent degradation by the proteasome. In terms of processing, ubiquitinated, leading to degradation by the proteasome. In terms of tissue distribution, expressed in skeletal muscle, kidney, heart, placenta, liver, thymus, lung, and ovary, with little or no expression in other tissues.

It is found in the cytoplasm. The protein resides in the nucleus. It localises to the mitochondrion. The enzyme catalyses Thiol-dependent hydrolysis of ester, thioester, amide, peptide and isopeptide bonds formed by the C-terminal Gly of ubiquitin (a 76-residue protein attached to proteins as an intracellular targeting signal).. In terms of biological role, hydrolase that removes conjugated ubiquitin from target proteins and regulates various pathways such as the TGF-beta receptor signaling, NF-kappa-B and RNF41/NRDP1-PRKN pathways. Acts as a key regulator of TGF-beta receptor signaling pathway, but the precise mechanism is still unclear: according to a report, acts by promoting deubiquitination of monoubiquitinated R-SMADs (SMAD1, SMAD2 and/or SMAD3), thereby alleviating inhibition of R-SMADs and promoting activation of TGF-beta target genes. According to another reports, regulates the TGF-beta receptor signaling pathway by mediating deubiquitination and stabilization of TGFBR1, leading to an enhanced TGF-beta signal. Able to mediate deubiquitination of monoubiquitinated substrates, 'Lys-27'-, 'Lys-48'- and 'Lys-63'-linked polyubiquitin chains. May also regulate gene expression and/or DNA repair through the deubiquitination of histone H2B. Acts as an inhibitor of mitophagy by counteracting the action of parkin (PRKN): hydrolyzes cleavage of 'Lys-48'- and 'Lys-63'-linked polyubiquitin chains attached by parkin on target proteins such as MFN2, thereby reducing parkin's ability to drive mitophagy. Acts as an associated component of COP9 signalosome complex (CSN) and regulates different pathways via this association: regulates NF-kappa-B by mediating deubiquitination of NFKBIA and deubiquitinates substrates bound to VCP. Involved in endosome organization by mediating deubiquitination of SQSTM1: ubiquitinated SQSTM1 forms a molecular bridge that restrains cognate vesicles in the perinuclear region and its deubiquitination releases target vesicles for fast transport into the cell periphery. Acts as a negative regulator of antifungal immunity by mediating 'Lys-27'-linked deubiquitination of CARD9, thereby inactivating CARD9. Its function is as follows. (Microbial infection) Protects APC and human papillomavirus type 16 protein E6 against degradation via the ubiquitin proteasome pathway. The chain is Ubiquitin carboxyl-terminal hydrolase 15 from Homo sapiens (Human).